Consider the following 320-residue polypeptide: Aldose reductase (320 aa).

The active-site Proton donor is Tyr60. Residue His121 coordinates substrate. Residue 215–269 (SPLGSSEKNLAHDPVVEKVANKLNKTPGQVLIKWALQRGTSVIPKSSKDERIKEN) coordinates NADP(+).

It belongs to the aldo/keto reductase family.

It carries out the reaction an alditol + NAD(+) = an aldose + NADH + H(+). The catalysed reaction is an alditol + NADP(+) = an aldose + NADPH + H(+). In Hordeum vulgare (Barley), this protein is Aldose reductase.